The following is a 109-amino-acid chain: Nucleoid-associated protein Sputw3181_1707 (109 aa).

The protein belongs to the YbaB/EbfC family. Homodimer.

It localises to the cytoplasm. It is found in the nucleoid. Binds to DNA and alters its conformation. May be involved in regulation of gene expression, nucleoid organization and DNA protection. This chain is Nucleoid-associated protein Sputw3181_1707, found in Shewanella sp. (strain W3-18-1).